The chain runs to 295 residues: Bifunctional protein FolD (295 aa).

NADP(+) contacts are provided by residues 165 to 167 (GRG), serine 192, and isoleucine 233.

The protein belongs to the tetrahydrofolate dehydrogenase/cyclohydrolase family. In terms of assembly, homodimer.

It catalyses the reaction (6R)-5,10-methylene-5,6,7,8-tetrahydrofolate + NADP(+) = (6R)-5,10-methenyltetrahydrofolate + NADPH. It carries out the reaction (6R)-5,10-methenyltetrahydrofolate + H2O = (6R)-10-formyltetrahydrofolate + H(+). It functions in the pathway one-carbon metabolism; tetrahydrofolate interconversion. Its function is as follows. Catalyzes the oxidation of 5,10-methylenetetrahydrofolate to 5,10-methenyltetrahydrofolate and then the hydrolysis of 5,10-methenyltetrahydrofolate to 10-formyltetrahydrofolate. The sequence is that of Bifunctional protein FolD from Tropheryma whipplei (strain Twist) (Whipple's bacillus).